Consider the following 204-residue polypeptide: Ribonuclease HII (204 aa).

Positions T17 to L204 constitute an RNase H type-2 domain. Residues D23, E24, and D115 each contribute to the a divalent metal cation site.

The protein belongs to the RNase HII family. Requires Mn(2+) as cofactor. The cofactor is Mg(2+).

Its subcellular location is the cytoplasm. It carries out the reaction Endonucleolytic cleavage to 5'-phosphomonoester.. Endonuclease that specifically degrades the RNA of RNA-DNA hybrids. This Psychromonas ingrahamii (strain DSM 17664 / CCUG 51855 / 37) protein is Ribonuclease HII.